The chain runs to 510 residues: GMP synthase [glutamine-hydrolyzing] (510 aa).

Residues 5–195 (LVIVVDFGGQ…LFDICNLKGD (191 aa)) enclose the Glutamine amidotransferase type-1 domain. C82 functions as the Nucleophile in the catalytic mechanism. Active-site residues include H169 and E171. The GMPS ATP-PPase domain occupies 196–385 (WSMSSFVDEK…LGIPHKLVWR (190 aa)). 223–229 (SGGVDSS) is an ATP binding site.

As to quaternary structure, homodimer.

The catalysed reaction is XMP + L-glutamine + ATP + H2O = GMP + L-glutamate + AMP + diphosphate + 2 H(+). It participates in purine metabolism; GMP biosynthesis; GMP from XMP (L-Gln route): step 1/1. In terms of biological role, catalyzes the synthesis of GMP from XMP. The protein is GMP synthase [glutamine-hydrolyzing] of Clostridium kluyveri (strain NBRC 12016).